We begin with the raw amino-acid sequence, 138 residues long: Nucleoside diphosphate kinase (138 aa).

ATP is bound by residues Lys9, Phe57, Arg85, Thr91, Arg102, and Asn112. Residue His115 is the Pros-phosphohistidine intermediate of the active site.

It belongs to the NDK family. In terms of assembly, homotetramer. It depends on Mg(2+) as a cofactor.

Its subcellular location is the cytoplasm. The enzyme catalyses a 2'-deoxyribonucleoside 5'-diphosphate + ATP = a 2'-deoxyribonucleoside 5'-triphosphate + ADP. It carries out the reaction a ribonucleoside 5'-diphosphate + ATP = a ribonucleoside 5'-triphosphate + ADP. Major role in the synthesis of nucleoside triphosphates other than ATP. The ATP gamma phosphate is transferred to the NDP beta phosphate via a ping-pong mechanism, using a phosphorylated active-site intermediate. The chain is Nucleoside diphosphate kinase from Desulforapulum autotrophicum (strain ATCC 43914 / DSM 3382 / VKM B-1955 / HRM2) (Desulfobacterium autotrophicum).